A 258-amino-acid polypeptide reads, in one-letter code: Acidic leucine-rich nuclear phosphoprotein 32 family member E (258 aa).

The residue at position 1 (M1) is an N-acetylmethionine. LRR repeat units lie at residues 18–38, 43–64, 65–87, and 89–110; these read EVTELVLDNCLCVNGEIEGLN, ELEFLSMANVELSSLARLPSLN, KLRKLELSDNIISGGLEVLAEKC, and NLTYLNLSGNKIKDLSTVEALQ. A Glycyl lysine isopeptide (Lys-Gly) (interchain with G-Cter in SUMO2) cross-link involves residue K68. In terms of domain architecture, LRRCT spans 123 to 161; sequence CEITNLEDYRESIFELLQQITYLDGFDQEDNEAPDSEEE. Composition is skewed to acidic residues over residues 149–206 and 216–238; these read DQED…EEEV and IQDEEDDDDYVDEGEEEEEEEEE. Positions 149 to 258 are disordered; that stretch reads DQEDNEAPDS…AEDDGEEDDD (110 aa). The segment at 205–258 is ZID domain; that stretch reads EVGLSYLMKEEIQDEEDDDDYVDEGEEEEEEEEEGPRGEKRKRDAEDDGEEDDD. Residues 239-249 are compositionally biased toward basic and acidic residues; the sequence is GPRGEKRKRDA.

Belongs to the ANP32 family. As to quaternary structure, component of a SWR1-like complex, composed of EP400, KAT5/TIP60, TRRAP, BRD8, RUVBL1, RUVBL2, ING3 and ANP32E; the complex does not contain SRCAP. Interacts with H2A.Z/H2AZ1. Interacts with the importin alpha KPNA1 and KPNA2. Post-translationally, phosphorylated. The phosphorylation is nuclear localization signal (NLS)-dependent.

Its subcellular location is the cytoplasm. It is found in the nucleus. Histone chaperone that specifically mediates the genome-wide removal of histone H2A.Z/H2AZ1 from the nucleosome: removes H2A.Z/H2AZ1 from its normal sites of deposition, especially from enhancer and insulator regions. Not involved in deposition of H2A.Z/H2AZ1 in the nucleosome. May stabilize the evicted H2A.Z/H2AZ1-H2B dimer, thus shifting the equilibrium towards dissociation and the off-chromatin state. Inhibits activity of protein phosphatase 2A (PP2A). Does not inhibit protein phosphatase 1. May play a role in cerebellar development and synaptogenesis. This is Acidic leucine-rich nuclear phosphoprotein 32 family member E (Anp32e) from Rattus norvegicus (Rat).